The chain runs to 319 residues: Formimidoylglutamase (319 aa).

Mn(2+) contacts are provided by H131, D154, H156, D158, C248, and D250.

It belongs to the arginase family. Mn(2+) serves as cofactor.

The enzyme catalyses N-formimidoyl-L-glutamate + H2O = formamide + L-glutamate. It participates in amino-acid degradation; L-histidine degradation into L-glutamate; L-glutamate from N-formimidoyl-L-glutamate (hydrolase route): step 1/1. Catalyzes the conversion of N-formimidoyl-L-glutamate to L-glutamate and formamide. In Legionella pneumophila (strain Lens), this protein is Formimidoylglutamase.